Consider the following 119-residue polypeptide: Putative membrane protein insertion efficiency factor (119 aa).

The protein belongs to the UPF0161 family.

The protein resides in the cell inner membrane. In terms of biological role, could be involved in insertion of integral membrane proteins into the membrane. The sequence is that of Putative membrane protein insertion efficiency factor from Agrobacterium fabrum (strain C58 / ATCC 33970) (Agrobacterium tumefaciens (strain C58)).